We begin with the raw amino-acid sequence, 23 residues long: Unknown protein NF016 from 2D-PAGE (23 aa).

This chain is Unknown protein NF016 from 2D-PAGE, found in Naegleria fowleri (Brain eating amoeba).